A 41-amino-acid polypeptide reads, in one-letter code: Photosystem I reaction center subunit IX (41 aa).

A helical transmembrane segment spans residues 7–29 (YLSTAPVLLTVWLSITASGIMII).

Belongs to the PsaJ family.

It is found in the plastid. The protein resides in the chloroplast thylakoid membrane. In terms of biological role, may help in the organization of the PsaE and PsaF subunits. The sequence is that of Photosystem I reaction center subunit IX from Heterosigma akashiwo (strain NIES-293 / 8280G21-1).